Here is a 522-residue protein sequence, read N- to C-terminus: Protein nucleotidyltransferase YdiU (522 aa).

8 residues coordinate ATP: glycine 109, glycine 111, arginine 112, lysine 132, aspartate 144, glycine 145, arginine 195, and arginine 202. Catalysis depends on aspartate 271, which acts as the Proton acceptor. Mg(2+) contacts are provided by asparagine 272 and aspartate 281. Aspartate 281 is a binding site for ATP.

The protein belongs to the SELO family. Requires Mg(2+) as cofactor. Mn(2+) serves as cofactor.

It catalyses the reaction L-seryl-[protein] + ATP = 3-O-(5'-adenylyl)-L-seryl-[protein] + diphosphate. It carries out the reaction L-threonyl-[protein] + ATP = 3-O-(5'-adenylyl)-L-threonyl-[protein] + diphosphate. The catalysed reaction is L-tyrosyl-[protein] + ATP = O-(5'-adenylyl)-L-tyrosyl-[protein] + diphosphate. The enzyme catalyses L-histidyl-[protein] + UTP = N(tele)-(5'-uridylyl)-L-histidyl-[protein] + diphosphate. It catalyses the reaction L-seryl-[protein] + UTP = O-(5'-uridylyl)-L-seryl-[protein] + diphosphate. It carries out the reaction L-tyrosyl-[protein] + UTP = O-(5'-uridylyl)-L-tyrosyl-[protein] + diphosphate. Nucleotidyltransferase involved in the post-translational modification of proteins. It can catalyze the addition of adenosine monophosphate (AMP) or uridine monophosphate (UMP) to a protein, resulting in modifications known as AMPylation and UMPylation. The sequence is that of Protein nucleotidyltransferase YdiU from Burkholderia ambifaria (strain ATCC BAA-244 / DSM 16087 / CCUG 44356 / LMG 19182 / AMMD) (Burkholderia cepacia (strain AMMD)).